Here is a 599-residue protein sequence, read N- to C-terminus: Cytochrome P450 monooxygenase ALT8 (599 aa).

A run of 2 helical transmembrane segments spans residues 4 to 21 (LACVGAAAMACALAVYLG) and 36 to 56 (ILFGCSGLWYVWKGLLWPAYF). N-linked (GlcNAc...) asparagine glycosylation occurs at asparagine 127. The span at 495–504 (DDSSAASPSF) shows a compositional bias: low complexity. The disordered stretch occupies residues 495-522 (DDSSAASPSFGGSGKRKSQYTDTHKEPS). Position 539 (cysteine 539) interacts with heme.

It belongs to the cytochrome P450 family. Requires heme as cofactor.

It localises to the membrane. Its pathway is secondary metabolite biosynthesis. Its function is as follows. Cytochrome P450 monooxygenase; part of the gene cluster that mediates the biosynthesis of the host-selective toxins (HSTs) AAL-toxins, sphinganine-analog mycotoxins responsible for Alternaria stem canker on tomato by the tomato pathotype. The biosynthesis starts with the polyketide synthase ALT1-catalyzed C-16 carbon chain assembly from one starter acetyl-CoA unit with malonyl-CoA extender units. ALT1 also selectively transfers methyl groups at the first and the third cycle of chain elongation for AAL toxin. The C-16 polyketide chain is released from the enzyme by a nucleophilic attack of a carbanion, which is derived from R-carbon of glycin by decarboxylation, on the carbonyl carbon of polyketide acyl chain. This step is probably catalyzed by a pyridoxal 5'-phosphate-dependent aminoacyl transferase ALT4. The respective functions of the other enzymes encoded by the cluster have still to be elucidated. The sphingosine N-acyltransferase-like protein ALT7 seems not to act as a resistance/self-tolerance factor against the toxin in the toxin biosynthetic gene cluster, contrary to what is expected. This is Cytochrome P450 monooxygenase ALT8 from Alternaria alternata (Alternaria rot fungus).